We begin with the raw amino-acid sequence, 242 residues long: RNA polymerase sigma factor for flagellar operon (242 aa).

The short motif at 55-68 (DMQQIGLIALVEAG) is the Polymerase core binding element. Residues 211-230 (LHEIALVLDLTPPRICQLHK) constitute a DNA-binding region (H-T-H motif).

It belongs to the sigma-70 factor family.

Sigma factors are initiation factors that promote the attachment of RNA polymerase to specific initiation sites and are then released. This alternative sigma factor is specific for the flagellin gene (fliC) expression. The protein is RNA polymerase sigma factor for flagellar operon (lafS) of Vibrio parahaemolyticus serotype O3:K6 (strain RIMD 2210633).